The sequence spans 526 residues: Peptide chain release factor 3 (526 aa).

The tr-type G domain occupies 8 to 277; it reads NKRRTFAIIS…GLTQWAPAPQ (270 aa). Residues 17–24, 85–89, and 139–142 contribute to the GTP site; these read SHPDAGKT, DTPGH, and NKLD.

It belongs to the TRAFAC class translation factor GTPase superfamily. Classic translation factor GTPase family. PrfC subfamily.

Its subcellular location is the cytoplasm. Functionally, increases the formation of ribosomal termination complexes and stimulates activities of RF-1 and RF-2. It binds guanine nucleotides and has strong preference for UGA stop codons. It may interact directly with the ribosome. The stimulation of RF-1 and RF-2 is significantly reduced by GTP and GDP, but not by GMP. The protein is Peptide chain release factor 3 of Histophilus somni (strain 2336) (Haemophilus somnus).